The chain runs to 481 residues: GDP-fucose protein O-fucosyltransferase 3 (481 aa).

The Cytoplasmic portion of the chain corresponds to 1–8 (MVRFQRRK). Residues 9–31 (LLASCLCVTATVFLMVTLQVVVE) traverse the membrane as a helical; Signal-anchor for type II membrane protein segment. At 32-481 (LGKFERKKLK…EEFWALVFKD (450 aa)) the chain is on the lumenal side. Asn-110, Asn-168, and Asn-318 each carry an N-linked (GlcNAc...) asparagine glycan. A disulfide bridge links Cys-389 with Cys-392. N-linked (GlcNAc...) asparagine glycosylation is present at Asn-468.

This sequence belongs to the glycosyltransferase 10 family. In terms of tissue distribution, widely expressed, with a higher expression in liver and thymus.

The protein resides in the endoplasmic reticulum membrane. It catalyses the reaction L-threonyl-[protein] + GDP-beta-L-fucose = 3-O-(alpha-L-fucosyl)-L-threonyl-[protein] + GDP + H(+). The enzyme catalyses L-seryl-[protein] + GDP-beta-L-fucose = 3-O-(alpha-L-fucosyl)-L-seryl-[protein] + GDP + H(+). It participates in protein modification; protein glycosylation. Protein O-fucosyltransferase that specifically catalyzes O-fucosylation of serine or threonine residues in EMI domains of target proteins, such as MMRN1, MMRN2 and EMID1. Attaches fucose through an O-glycosidic linkage. O-fucosylation of EMI domain-containing proteins may be required for facilitating protein folding and secretion. May also show alpha-(1,3)-fucosyltransferase activity toward the innermost N-acetyl glucosamine (GlcNAc) residue in biantennary N-glycan acceptors. However, this was tested with a library of synthetic substrates and this activity is unsure in vivo. May be involved in biosynthesis of Lewis X-carrying biantennary N-glycans that regulate neuron stem cell self-renewal during brain development. This is GDP-fucose protein O-fucosyltransferase 3 from Mus musculus (Mouse).